The chain runs to 288 residues: MRSEKEVYDIVLNFAKTDKRIRMVTLEGSRTNTNIPPDDFQDFDITFFVTDMDSFTSDDKWLDIFGERLILQKPEDMELFPAVEKGFSYLMLFTDDVKIDLTLLPLELIDEYFTWDKLVKLLLDKDNRIVKPPIPTDIDYHLQKPTQRMFDDCCNEFWNTTTYVVKGLCRKEILFAIDHMNDIVRKELLRMISWLIGIKQGFHFSLGKNYKFMKQYVPEELWERLMSTYNMDSYPHMWESFEQCMALFREVSSEVACQLDYQYPLYDEKISNYVIRQKKKYGIEDDNK.

The enzyme catalyses streptomycin + ATP = 6-O-adenylylstreptomycin + diphosphate. Its function is as follows. Mediates bacterial resistance to streptomycin, is probably a streptomycin 6-adenylyltransferase. In Campylobacter jejuni, this protein is Aminoglycoside 6-adenylyltransferase.